The chain runs to 753 residues: MERARPEPPPQPRPLRPAPPPLPVEGTSFWAAAMEPPPSSPTLSAAASATLASSCGEAVASGLQPAVRRLLQVKPEQVLLLPQPQAQNEEAAASSAQARLLQFRPDLRLLQPPTASDGATSRPELHPVQPLALHVKAKKQKLGPSLDQSVGPRGAVETGPRASRVVKLEGPGPALGYFRGDEKGKLEAEEVMRDSMQGGAGKSPAAIREGVIKTEEPERLLEDCRLGAEPASNGLVHGSAEVILAPTSGAFGPHQQDLRIPLTLHTVPPGARIQFQGAPPSELIRLTKVPLTPVPTKMQSLLEPSVKIETKDVPLTVLPSDAGIPDTPFSKDRNGHVKRPMNAFMVWARIHRPALAKANPAANNAEISVQLGLEWNKLSEEQKKPYYDEAQKIKEKHREEFPGWVYQPRPGKRKRFPLSVSNVFSGTTQNIISTNPTTVYPYRSPTYSVVIPSLQNPITHPVGETSPAIQLPTPAVQSPSPVTLFQPSVSSAAQVAVQDPSLPVYPALPPQRFTGPSQTDTHQLHSEATHTVKQPTPVSLESANRISSSASTAHARFATSTIQPPREYSSVSPCPRSAPIPQASPIPHPHVYQPPPLGHPATLFGTPPRFSFHHPYFLPGPHYFPSSTCPYSRPPFGYGNFPSSMPECLSYYEDRYPKHEGIFSTLNRDYSFRDYSSECTHSENSRSCENMNGTSYYNSHSHSGEENLNPVPQLDIGTLENVFTAPTSTPSSIQQVNVTDSDEEEEEKVLRDL.

2 disordered regions span residues 1–45 (MERA…TLSA) and 137–161 (AKKQ…TGPR). The segment covering 7-23 (EPPPQPRPLRPAPPPLP) has biased composition (pro residues). A DNA-binding region (HMG box) is located at residues 337–405 (VKRPMNAFMV…KHREEFPGWV (69 aa)). Disordered stretches follow at residues 514-575 (TGPS…SPCP) and 726-753 (PTST…LRDL). Composition is skewed to polar residues over residues 531–563 (TVKQ…STIQ) and 726–739 (PTST…VNVT).

As to quaternary structure, interacts with CTNNB1, competitively inhibiting CTNNB1-TCF7L2/TCF4 interaction.

It is found in the nucleus. The protein localises to the cytoplasm. Acts both as a transcriptional activator and a repressor. Binds to the DNA sequence 5'-ACAAT-3' and shows a preference for guanine residues surrounding this core motif. Binds to its own promoter and activates its own transcription. Required to activate the expression of postmeiotic genes involved in spermiogenesis. Binds to the promoter region of CTNNB1 and represses its transcription which leads to inhibition of Wnt signaling. Also inhibits Wnt signaling by binding to the CTNNB1 protein, preventing interaction of CTNNB1 with TCF7L2/TCF4. This is Transcription factor SOX-30 (SOX30) from Homo sapiens (Human).